Reading from the N-terminus, the 477-residue chain is UDP-N-acetylmuramate--L-alanine ligase (477 aa).

G112–T118 contacts ATP.

This sequence belongs to the MurCDEF family.

It is found in the cytoplasm. It carries out the reaction UDP-N-acetyl-alpha-D-muramate + L-alanine + ATP = UDP-N-acetyl-alpha-D-muramoyl-L-alanine + ADP + phosphate + H(+). Its pathway is cell wall biogenesis; peptidoglycan biosynthesis. In terms of biological role, cell wall formation. This is UDP-N-acetylmuramate--L-alanine ligase from Delftia acidovorans (strain DSM 14801 / SPH-1).